Consider the following 525-residue polypeptide: BTB/POZ domain-containing protein 2 (525 aa).

The segment at M1–A86 is disordered. A compositionally biased stretch (gly residues) spans V16–P26. Residues G27–P55 show a composition bias toward low complexity. The segment covering G56 to P65 has biased composition (pro residues). The segment covering G66–A86 has biased composition (low complexity). The BTB domain maps to C117–P187.

As to quaternary structure, interacts with topoisomerase 1 and with TRIM5 isoform Delta.

It is found in the cytoplasm. The protein is BTB/POZ domain-containing protein 2 (BTBD2) of Homo sapiens (Human).